The sequence spans 164 residues: Single-stranded DNA-binding protein 2 (164 aa).

The region spanning 5–109 (INKVILVGNL…IVADEMQMLG (105 aa)) is the SSB domain. The tract at residues 105-164 (MQMLGGRSDGGGMGGGGERPQRQTSQRQDYAPRRQARQPSQSPQSSPPPMDDFADDDIPF) is disordered. The segment covering 111–122 (RSDGGGMGGGGE) has biased composition (gly residues). The Important for interaction with partner proteins signature appears at 159–164 (DDDIPF).

As to quaternary structure, homotetramer.

Functionally, plays an important role in DNA replication, recombination and repair. Binds to ssDNA and to an array of partner proteins to recruit them to their sites of action during DNA metabolism. This is Single-stranded DNA-binding protein 2 (ssb2) from Xylella fastidiosa (strain 9a5c).